We begin with the raw amino-acid sequence, 622 residues long: Phosphoenolpyruvate carboxykinase [GTP] (622 aa).

Substrate contacts are provided by residues arginine 86 and 220–222 (YGG). Positions 229 and 248 each coordinate Mn(2+). Serine 270 provides a ligand contact to substrate. 271-276 (MCGKTS) is a GTP binding site. Cysteine 272 is an active-site residue. Residue aspartate 289 participates in Mn(2+) binding. The span at 360-374 (ENHSGKWWRGKKDSE) shows a compositional bias: basic and acidic residues. The segment at 360 to 381 (ENHSGKWWRGKKDSEGNEISPS) is disordered. Substrate is bound at residue 384–386 (NAR). Positions 386 and 418 each coordinate GTP.

The protein belongs to the phosphoenolpyruvate carboxykinase [GTP] family. Mn(2+) serves as cofactor.

It localises to the cytoplasm. The enzyme catalyses oxaloacetate + GTP = phosphoenolpyruvate + GDP + CO2. It functions in the pathway carbohydrate biosynthesis; gluconeogenesis. Catalyzes the conversion of oxaloacetate (OAA) to phosphoenolpyruvate (PEP), the rate-limiting step in the metabolic pathway that produces glucose from lactate and other precursors derived from the citric acid cycle. The sequence is that of Phosphoenolpyruvate carboxykinase [GTP] from Thermococcus sibiricus (strain DSM 12597 / MM 739).